The following is a 65-amino-acid chain: Large ribosomal subunit protein uL30 (65 aa).

Belongs to the universal ribosomal protein uL30 family. In terms of assembly, part of the 50S ribosomal subunit.

The sequence is that of Large ribosomal subunit protein uL30 from Chloroflexus aurantiacus (strain ATCC 29366 / DSM 635 / J-10-fl).